A 227-amino-acid chain; its full sequence is Cytidylate kinase (227 aa).

Position 12–20 (12–20 (GPSGSGKGT)) interacts with ATP.

This sequence belongs to the cytidylate kinase family. Type 1 subfamily.

Its subcellular location is the cytoplasm. The enzyme catalyses CMP + ATP = CDP + ADP. It catalyses the reaction dCMP + ATP = dCDP + ADP. The polypeptide is Cytidylate kinase (Nitrosococcus oceani (strain ATCC 19707 / BCRC 17464 / JCM 30415 / NCIMB 11848 / C-107)).